An 875-amino-acid chain; its full sequence is Valine--tRNA ligase (875 aa).

Positions 45 to 55 (PNVTGVLHMGH) match the 'HIGH' region motif. Residues 524–528 (KMSKS) carry the 'KMSKS' region motif. Residue Lys-527 coordinates ATP. A coiled-coil region spans residues 803 to 837 (VKSLIDKTKELIRLEKQLEKYKMLNISVSKKLENE).

This sequence belongs to the class-I aminoacyl-tRNA synthetase family. ValS type 1 subfamily. In terms of assembly, monomer.

Its subcellular location is the cytoplasm. The catalysed reaction is tRNA(Val) + L-valine + ATP = L-valyl-tRNA(Val) + AMP + diphosphate. Its function is as follows. Catalyzes the attachment of valine to tRNA(Val). As ValRS can inadvertently accommodate and process structurally similar amino acids such as threonine, to avoid such errors, it has a 'posttransfer' editing activity that hydrolyzes mischarged Thr-tRNA(Val) in a tRNA-dependent manner. The chain is Valine--tRNA ligase from Borreliella burgdorferi (strain ATCC 35210 / DSM 4680 / CIP 102532 / B31) (Borrelia burgdorferi).